A 512-amino-acid polypeptide reads, in one-letter code: Oryzalexin E synthase (512 aa).

Residues 6–26 (SELWMTAVATCMSLLLYLTIL) form a helical membrane-spanning segment. Cys452 contributes to the heme binding site.

It belongs to the cytochrome P450 family. It depends on heme as a cofactor.

Its subcellular location is the membrane. The enzyme catalyses ent-sandaracopimaradien-3beta-ol + reduced [NADPH--hemoprotein reductase] + O2 = oryzalexin E + oxidized [NADPH--hemoprotein reductase] + H2O + H(+). Enzyme of the diterpenoid metabolism involved in the biosynthesis of the oryzalexin class of phytoalexins. Can use ent-sandaracopimaradien and syn-stemodene as substrates, but no activity with syn-stemoden-19-oic acid. Hydroxylates 3-alpha-hydroxy-ent-sandaracopimaradiene at C-9-beta, resulting in a 3-alpha,9-beta-diol corresponding to oryzalexins E. This chain is Oryzalexin E synthase, found in Oryza sativa subsp. japonica (Rice).